The chain runs to 202 residues: MSRYRGPSLKKIRRLGALPGLTNKRSKAENDFIKKLRSDKKSQYRIRLEEKQKLRFNYGLRERQLRKYFSIAIKTRGSTGKVLMQLLEMRLDNIIFRLGMASTIPAARQLVNHRHVLVNGRIVDIPSYRCKSRDIIMARDEQQSNTFINNCINYSTHNRMEAPNHLTLLHPFKGLVNQIIDSKWVGFKINELLVVEYYFRKT.

The S4 RNA-binding domain occupies 89–152; it reads MRLDNIIFRL…QSNTFINNCI (64 aa).

It belongs to the universal ribosomal protein uS4 family. In terms of assembly, part of the 30S ribosomal subunit. Contacts protein S5. The interaction surface between S4 and S5 is involved in control of translational fidelity.

It localises to the plastid. Its function is as follows. One of the primary rRNA binding proteins, it binds directly to 16S rRNA where it nucleates assembly of the body of the 30S subunit. Functionally, with S5 and S12 plays an important role in translational accuracy. The chain is Small ribosomal subunit protein uS4c (rps4) from Epifagus virginiana (Beechdrops).